The following is a 129-amino-acid chain: Small ribosomal subunit protein uS11 (129 aa).

The protein belongs to the universal ribosomal protein uS11 family. As to quaternary structure, part of the 30S ribosomal subunit. Interacts with proteins S7 and S18. Binds to IF-3.

Located on the platform of the 30S subunit, it bridges several disparate RNA helices of the 16S rRNA. Forms part of the Shine-Dalgarno cleft in the 70S ribosome. In Roseobacter denitrificans (strain ATCC 33942 / OCh 114) (Erythrobacter sp. (strain OCh 114)), this protein is Small ribosomal subunit protein uS11.